The following is a 155-amino-acid chain: Xanthine-guanine phosphoribosyltransferase (155 aa).

Residues Arg37–Gly38, Arg69, and Asp90–Thr98 each bind 5-phospho-alpha-D-ribose 1-diphosphate. GMP is bound at residue Arg69. Mg(2+) is bound at residue Asp91. Guanine is bound by residues Asp94 and Ile137. Residues Asp94 and Ile137 each coordinate xanthine. GMP contacts are provided by residues Asp94–Thr98 and Trp136–Ile137.

Belongs to the purine/pyrimidine phosphoribosyltransferase family. XGPT subfamily. As to quaternary structure, homotetramer. Mg(2+) is required as a cofactor.

It is found in the cell inner membrane. The enzyme catalyses GMP + diphosphate = guanine + 5-phospho-alpha-D-ribose 1-diphosphate. It carries out the reaction XMP + diphosphate = xanthine + 5-phospho-alpha-D-ribose 1-diphosphate. The catalysed reaction is IMP + diphosphate = hypoxanthine + 5-phospho-alpha-D-ribose 1-diphosphate. Its pathway is purine metabolism; GMP biosynthesis via salvage pathway; GMP from guanine: step 1/1. The protein operates within purine metabolism; XMP biosynthesis via salvage pathway; XMP from xanthine: step 1/1. Its function is as follows. Purine salvage pathway enzyme that catalyzes the transfer of the ribosyl-5-phosphate group from 5-phospho-alpha-D-ribose 1-diphosphate (PRPP) to the N9 position of the 6-oxopurines guanine and xanthine to form the corresponding ribonucleotides GMP (guanosine 5'-monophosphate) and XMP (xanthosine 5'-monophosphate), with the release of PPi. To a lesser extent, also acts on hypoxanthine. In Aeromonas salmonicida (strain A449), this protein is Xanthine-guanine phosphoribosyltransferase.